Consider the following 296-residue polypeptide: HVA22-like protein i (296 aa).

The tract at residues 146 to 296 (STPRPQPPQK…LRKTRSEESR (151 aa)) is disordered. Residues 180–193 (VSLSSSSSSSSSEN) show a composition bias toward low complexity. Residues 223-233 (AGTTQIAQKSV) show a composition bias toward polar residues. Acidic residues predominate over residues 251–261 (QIEEVEGEAES). Residues 270–281 (GPKETVMEETIR) are compositionally biased toward basic and acidic residues.

The protein belongs to the DP1 family.

The polypeptide is HVA22-like protein i (HVA22I) (Arabidopsis thaliana (Mouse-ear cress)).